Here is a 653-residue protein sequence, read N- to C-terminus: Pentatricopeptide repeat-containing protein At3g14730 (653 aa).

PPR repeat units follow at residues 59–93, 95–119, 125–159, 160–193, 194–224, 226–260, 261–295, 296–326, 327–361, 362–396, 401–431, 432–466, 467–497, and 503–537; these read NVAT…GFLD, SPRA…VLVF, DVFG…GILP, DKYT…GFDS, DCYV…LPDR, DSVL…GVGV, SRHT…GSGS, DIVV…MDER, DLFT…GIRP, DIVT…GLLN, NEFI…MRVK, DSAS…GVKP, DEIT…METV, and TSDH…DNPV. The tract at residues 538–613 is type E motif; the sequence is VWRSILSSCR…TPGCSWIVLK (76 aa). The tract at residues 614-644 is type E(+) motif; it reads NGVHTFFTGNQTHPEFKSIHDWLSLVISHMH.

It belongs to the PPR family. PCMP-E subfamily.

This is Pentatricopeptide repeat-containing protein At3g14730 (PCMP-E31) from Arabidopsis thaliana (Mouse-ear cress).